A 362-amino-acid polypeptide reads, in one-letter code: Biotin synthase (362 aa).

In terms of domain architecture, Radical SAM core spans 39–267 (NVVQVSTLLS…ETQVRLSAGR (229 aa)). Cys54, Cys58, and Cys61 together coordinate [4Fe-4S] cluster. [2Fe-2S] cluster-binding residues include Cys98, Cys130, Cys190, and Arg262. The interval 317-362 (PFTKVSQPTTVEAKDSRYESLGEKPKWSRPSHTIEKNLELSGKGKN) is disordered. Positions 328 to 354 (EAKDSRYESLGEKPKWSRPSHTIEKNL) are enriched in basic and acidic residues.

The protein belongs to the radical SAM superfamily. Biotin synthase family. In terms of assembly, homodimer. It depends on [4Fe-4S] cluster as a cofactor. [2Fe-2S] cluster is required as a cofactor.

It carries out the reaction (4R,5S)-dethiobiotin + (sulfur carrier)-SH + 2 reduced [2Fe-2S]-[ferredoxin] + 2 S-adenosyl-L-methionine = (sulfur carrier)-H + biotin + 2 5'-deoxyadenosine + 2 L-methionine + 2 oxidized [2Fe-2S]-[ferredoxin]. The protein operates within cofactor biosynthesis; biotin biosynthesis; biotin from 7,8-diaminononanoate: step 2/2. In terms of biological role, catalyzes the conversion of dethiobiotin (DTB) to biotin by the insertion of a sulfur atom into dethiobiotin via a radical-based mechanism. In Flavobacterium psychrophilum (strain ATCC 49511 / DSM 21280 / CIP 103535 / JIP02/86), this protein is Biotin synthase.